The sequence spans 180 residues: Adipocyte-related X-chromosome expressed sequence 1 (180 aa).

At Met-1–Leu-11 the chain is on the cytoplasmic side. Residues Phe-12–Phe-32 form a helical; Signal-anchor for type II membrane protein membrane-spanning segment. At Lys-33 to Phe-180 the chain is on the lumenal side. An N-linked (GlcNAc...) asparagine glycan is attached at Asn-141.

It belongs to the SPCS3 family. As to expression, strongly expressed in epididymal white and brown adipose tissue with low levels in heart.

The protein resides in the endoplasmic reticulum membrane. In terms of biological role, plays a role in adipogenesis. This chain is Adipocyte-related X-chromosome expressed sequence 1, found in Mus musculus (Mouse).